Reading from the N-terminus, the 390-residue chain is uncharacterized protein (390 aa).

The next 2 membrane-spanning stretches (helical) occupy residues 27 to 47 (GGLI…MEWI) and 356 to 376 (FGGF…LASF).

This sequence belongs to the ERGIC family.

Its subcellular location is the membrane. This is an uncharacterized protein from Schizosaccharomyces pombe (strain 972 / ATCC 24843) (Fission yeast).